The following is a 623-amino-acid chain: Chaperone protein DnaK (623 aa).

A Phosphothreonine; by autocatalysis modification is found at threonine 175. The segment at 580–623 (PEGAQGAGFDPNNMGGANAGNASAGNDKKDDNVVDADFKVEDDK) is disordered. A compositionally biased stretch (low complexity) spans 591–604 (NNMGGANAGNASAG). Over residues 605-623 (NDKKDDNVVDADFKVEDDK) the composition is skewed to basic and acidic residues.

The protein belongs to the heat shock protein 70 family.

In terms of biological role, acts as a chaperone. The protein is Chaperone protein DnaK of Clostridium botulinum (strain Hall / ATCC 3502 / NCTC 13319 / Type A).